A 221-amino-acid chain; its full sequence is Thymidylate kinase (221 aa).

12 to 19 (GIDGAGKS) serves as a coordination point for ATP.

Belongs to the thymidylate kinase family.

The catalysed reaction is dTMP + ATP = dTDP + ADP. Functionally, phosphorylation of dTMP to form dTDP in both de novo and salvage pathways of dTTP synthesis. This chain is Thymidylate kinase, found in Paracidovorax citrulli (strain AAC00-1) (Acidovorax citrulli).